The sequence spans 525 residues: Chromosomal replication initiator protein DnaA (525 aa).

Positions 1 to 71 (MNDFWQHCSA…SDLARDFWNA (71 aa)) are domain I, interacts with DnaA modulators. The tract at residues 71–188 (APIEVQFVLD…GEADSMYERS (118 aa)) is domain II. Residues 160–182 (AAAGRRTWRPGPGAAPANGGEAD) form a disordered region. Positions 169–181 (PGPGAAPANGGEA) are enriched in low complexity. Residues 189–405 (KLNPVLTFDN…GALRKILAYS (217 aa)) form a domain III, AAA+ region region. ATP contacts are provided by glycine 233, glycine 235, lysine 236, and threonine 237. Positions 406–525 (KFHGREISIE…LHVLEQTLKG (120 aa)) are domain IV, binds dsDNA.

The protein belongs to the DnaA family. As to quaternary structure, oligomerizes as a right-handed, spiral filament on DNA at oriC.

The protein resides in the cytoplasm. Its function is as follows. Plays an essential role in the initiation and regulation of chromosomal replication. ATP-DnaA binds to the origin of replication (oriC) to initiate formation of the DNA replication initiation complex once per cell cycle. Binds the DnaA box (a 9 base pair repeat at the origin) and separates the double-stranded (ds)DNA. Forms a right-handed helical filament on oriC DNA; dsDNA binds to the exterior of the filament while single-stranded (ss)DNA is stabiized in the filament's interior. The ATP-DnaA-oriC complex binds and stabilizes one strand of the AT-rich DNA unwinding element (DUE), permitting loading of DNA polymerase. After initiation quickly degrades to an ADP-DnaA complex that is not apt for DNA replication. Binds acidic phospholipids. The protein is Chromosomal replication initiator protein DnaA of Burkholderia ambifaria (strain ATCC BAA-244 / DSM 16087 / CCUG 44356 / LMG 19182 / AMMD) (Burkholderia cepacia (strain AMMD)).